The primary structure comprises 367 residues: Phosphoribosylaminoimidazole-succinocarboxamide synthase (367 aa).

It belongs to the SAICAR synthetase family.

The enzyme catalyses 5-amino-1-(5-phospho-D-ribosyl)imidazole-4-carboxylate + L-aspartate + ATP = (2S)-2-[5-amino-1-(5-phospho-beta-D-ribosyl)imidazole-4-carboxamido]succinate + ADP + phosphate + 2 H(+). The protein operates within purine metabolism; IMP biosynthesis via de novo pathway; 5-amino-1-(5-phospho-D-ribosyl)imidazole-4-carboxamide from 5-amino-1-(5-phospho-D-ribosyl)imidazole-4-carboxylate: step 1/2. This is Phosphoribosylaminoimidazole-succinocarboxamide synthase from Aeromonas salmonicida (strain A449).